The following is an 859-amino-acid chain: Protein O-mannosyl-transferase Tmtc1 (859 aa).

The Cytoplasmic segment spans residues Met-1–Gly-22. The helical transmembrane segment at Leu-23 to Val-43 threads the bilayer. Residues Tyr-44–Pro-103 lie on the Extracellular side of the membrane. Residues Leu-104–Val-124 form a helical membrane-spanning segment. Residues Ala-125–Gly-134 are Cytoplasmic-facing. Helical transmembrane passes span Val-135–Gly-154 and Leu-155–Tyr-174. Residues Arg-175–Thr-189 are Cytoplasmic-facing. A helical transmembrane segment spans residues Ile-190 to Cys-210. Residues Gly-211–Arg-245 lie on the Extracellular side of the membrane. Residues Ser-246 to Pro-266 form a helical membrane-spanning segment. Topologically, residues Arg-267–Arg-288 are cytoplasmic. The chain crosses the membrane as a helical span at residues Thr-289–Leu-309. The Extracellular portion of the chain corresponds to Ser-310 to Arg-328. A helical transmembrane segment spans residues Asn-329–Leu-349. Residues Arg-350–Thr-422 lie on the Cytoplasmic side of the membrane. A helical transmembrane segment spans residues Ala-423–Met-443. At Ala-444–Arg-446 the chain is on the extracellular side. A helical membrane pass occupies residues Val-447–Trp-467. Topologically, residues Gln-468 to Ser-473 are cytoplasmic. A helical membrane pass occupies residues Trp-474 to Val-493. The Extracellular segment spans residues Arg-494–Glu-859. TPR repeat units lie at residues Pro-518–Met-551, Ala-552–Leu-585, Ala-586–Gly-620, Tyr-632–Leu-665, Ala-671–Gln-704, Gly-705–Glu-739, Pro-740–Asp-773, Tyr-774–Ala-807, and Ala-808–His-841. An N-linked (GlcNAc...) asparagine glycan is attached at Asn-567. Residue Asn-718 is glycosylated (N-linked (GlcNAc...) asparagine).

This sequence belongs to the TMTC family.

It is found in the membrane. The protein localises to the endoplasmic reticulum. It catalyses the reaction a di-trans,poly-cis-dolichyl beta-D-mannosyl phosphate + L-seryl-[protein] = 3-O-(alpha-D-mannosyl)-L-seryl-[protein] + a di-trans,poly-cis-dolichyl phosphate + H(+). The enzyme catalyses a di-trans,poly-cis-dolichyl beta-D-mannosyl phosphate + L-threonyl-[protein] = 3-O-(alpha-D-mannosyl)-L-threonyl-[protein] + a di-trans,poly-cis-dolichyl phosphate + H(+). Its pathway is protein modification; protein glycosylation. Functionally, transfers mannosyl residues to the hydroxyl group of serine or threonine residues. The chain is Protein O-mannosyl-transferase Tmtc1 from Drosophila melanogaster (Fruit fly).